We begin with the raw amino-acid sequence, 694 residues long: Elongation factor G 2 (694 aa).

Residues 6-282 (SKLRNIGISA…GVVDYLPDPT (277 aa)) enclose the tr-type G domain. GTP is bound by residues 15–22 (AHIDSGKT), 82–86 (DTPGH), and 136–139 (NKCD).

The protein belongs to the TRAFAC class translation factor GTPase superfamily. Classic translation factor GTPase family. EF-G/EF-2 subfamily.

Its subcellular location is the cytoplasm. Its function is as follows. Catalyzes the GTP-dependent ribosomal translocation step during translation elongation. During this step, the ribosome changes from the pre-translocational (PRE) to the post-translocational (POST) state as the newly formed A-site-bound peptidyl-tRNA and P-site-bound deacylated tRNA move to the P and E sites, respectively. Catalyzes the coordinated movement of the two tRNA molecules, the mRNA and conformational changes in the ribosome. The polypeptide is Elongation factor G 2 (Anaeromyxobacter dehalogenans (strain 2CP-C)).